Consider the following 287-residue polypeptide: uncharacterized protein (287 aa).

2 helical membrane passes run 12–32 and 217–237; these read IILL…GAAL and YTIG…VLIV.

It localises to the cell membrane. This is an uncharacterized protein from Mycoplasma pneumoniae (strain ATCC 29342 / M129 / Subtype 1) (Mycoplasmoides pneumoniae).